The primary structure comprises 553 residues: Putative transport protein YidE (553 aa).

The next 5 membrane-spanning stretches (helical) occupy residues 4 to 24, 28 to 48, 65 to 85, 95 to 115, and 158 to 178; these read IALTVSILALVAVVGLFIGNV, GIGLGIGGVLFGGIIVGHFVS, FGLILFVYTIGIQVGPGFFAS, LFAVLIVIIGGLVTAILHKLF, and MSYAMAYPFGICGILFTMWML. RCK C-terminal domains lie at 191–276 and 279–361; these read QQHE…VIGQ and DTSL…VLGN. Transmembrane regions (helical) follow at residues 371–391, 394–414, 439–459, 464–484, and 533–553; these read MLPVFIGIGLGVLLGSIPVFV, FPAALKLGLAGGPLIMALILG, IVLFLSVVGLKSGGDFVNTLV, LSWIGYGALITAVPLITVGIL, and LVMFLRIITPQLLAVLFWSIG.

It belongs to the AAE transporter (TC 2.A.81) family. YidE subfamily.

The protein localises to the cell membrane. The protein is Putative transport protein YidE of Shigella dysenteriae serotype 1 (strain Sd197).